The primary structure comprises 119 residues: Large ribosomal subunit protein bL19 (119 aa).

The protein belongs to the bacterial ribosomal protein bL19 family.

This protein is located at the 30S-50S ribosomal subunit interface and may play a role in the structure and function of the aminoacyl-tRNA binding site. This is Large ribosomal subunit protein bL19 from Pelobacter propionicus (strain DSM 2379 / NBRC 103807 / OttBd1).